A 268-amino-acid polypeptide reads, in one-letter code: MKKALLALFMVVSIAALAACGAGNDNQSKDNAKDGDLWASIKKKGVLTVGTEGTYEPFTYHDKDTDKLTGYDVEVITEVAKRLGLKVDFKETQWDSMFAGLNSKRFDVVANQVGKTDREDKYDFSDKYTTSRAVVVTKKDNNDIKSEADVKGKTSAQSLTSNYNKLATNAGAKVEGVEGMAQALQMIQQGRVDMTYNDKLAVLNYLKTSGNKNVKIAFETGEPQSTYFTFRKGSGEVVDQVNKALKEMKEDGTLSKISKKWFGEDVSK.

The signal sequence occupies residues 1-19; that stretch reads MKKALLALFMVVSIAALAA. C20 is lipidated: N-palmitoyl cysteine. The S-diacylglycerol cysteine moiety is linked to residue C20.

It belongs to the bacterial solute-binding protein 3 family. The complex is composed of two ATP-binding proteins (TcyC), two transmembrane proteins (TcyB) and a solute-binding protein (TcyA).

It is found in the cell membrane. Part of the ABC transporter complex TcyABC involved in L-cystine import. This chain is L-cystine-binding protein TcyA (tcyA), found in Bacillus subtilis (strain 168).